Reading from the N-terminus, the 182-residue chain is Succinate dehydrogenase [ubiquinone] cytochrome b small subunit, mitochondrial (182 aa).

Residues 1 to 71 (MSLSLLLRGA…SAPRMASAGS (71 aa)) lie on the Mitochondrial matrix side of the membrane. Residues 72-96 (SHTLLWTVERIVSAGLLAVIPAAFI) traverse the membrane as a helical segment. Residues 97–101 (APSQV) lie on the Mitochondrial intermembrane side of the membrane. A helical transmembrane segment spans residues 102–122 (LDALMAISVVIHTHWGVEAMV). Heme is bound at residue histidine 113. At 123-135 (VDYMRPSVVGNVL) the chain is on the mitochondrial matrix side. Tyrosine 125 lines the a ubiquinone pocket. A helical transmembrane segment spans residues 136–157 (PKVAHIALIIISVATLGGLFYF). Over 158–182 (IQNDVGLANGIKRFWAIKGKDAEKA) the chain is Mitochondrial intermembrane.

The protein belongs to the CybS family. In terms of assembly, forms part of complex II containing four subunits: a flavoprotein (FP), an iron-sulfur protein (IP) and a cytochrome b composed of a large and a small subunit.

It is found in the mitochondrion inner membrane. It participates in carbohydrate metabolism; tricarboxylic acid cycle. Its function is as follows. Membrane-anchoring subunit of succinate dehydrogenase (SDH) that is involved in complex II of the mitochondrial electron transport chain and is responsible for transferring electrons from succinate to ubiquinone (coenzyme Q). The polypeptide is Succinate dehydrogenase [ubiquinone] cytochrome b small subunit, mitochondrial (Drosophila melanogaster (Fruit fly)).